Consider the following 329-residue polypeptide: Short-chain dehydrogenase/reductase tropG (329 aa).

Positions 57, 86, 113, 203, and 207 each coordinate NADP(+). Tyrosine 203 acts as the Proton acceptor in catalysis. The Lowers pKa of active site Tyr role is filled by lysine 207.

The protein belongs to the short-chain dehydrogenases/reductases (SDR) family.

It participates in secondary metabolite biosynthesis. Short-chain dehydrogenase/reductase; part of the gene cluster that mediates the biosynthesis of the tropolone class of fungal maleic anhydrides. The pathway begins with the synthesis of 3-methylorcinaldehyde by the non-reducing polyketide synthase (PKS) tropA. 3-methylorcinaldehyde is the substrate for the FAD-dependent monooxygenase tropB to yield a dearomatized hydroxycyclohexadione. The 2-oxoglutarate-dependent dioxygenase tropC then performs the oxidative ring expansion to provide the first tropolone metabolite stipitaldehyde. Trop D converts stipitaldehyde into stipitacetal which is in turn converted to stipitalide by the short-chain dehydrogenase/reductase tropE. The next steps involve tropF, tropG, tropH, tropI and tropJ to form successive tropolone maleic anhydrides including stipitaldehydic, stipitatonic and stipitatic acids. The polypeptide is Short-chain dehydrogenase/reductase tropG (Talaromyces stipitatus (strain ATCC 10500 / CBS 375.48 / QM 6759 / NRRL 1006) (Penicillium stipitatum)).